The chain runs to 425 residues: CinA-like protein (425 aa).

This sequence belongs to the CinA family.

In Trichodesmium erythraeum (strain IMS101), this protein is CinA-like protein.